Reading from the N-terminus, the 281-residue chain is Bidirectional sugar transporter SWEET14 (281 aa).

Residues 1–6 lie on the Extracellular side of the membrane; that stretch reads MVLTHN. Residues 7–27 form a helical membrane-spanning segment; the sequence is VLAVTFGVLGNIISFIVFLAP. The MtN3/slv 1 domain maps to 11–97; it reads TFGVLGNIIS…ILFITYANKK (87 aa). Over 28–42 the chain is Cytoplasmic; sequence VPTFVRICKKKSIEG. The chain crosses the membrane as a helical span at residues 43 to 63; that stretch reads FESLPYVSALFSAMLWIYYAL. Residues 64–70 lie on the Extracellular side of the membrane; sequence QKDGAGF. A helical membrane pass occupies residues 71-91; that stretch reads LLITINAVGCFIETIYIILFI. Residues 92 to 104 are Cytoplasmic-facing; it reads TYANKKARISTLK. A helical transmembrane segment spans residues 105–125; sequence VLGLLNFLGFAAIILVCELLT. Topologically, residues 126–132 are extracellular; it reads KGSNREK. The helical transmembrane segment at 133–153 threads the bilayer; the sequence is VLGGICVGFSVCVFAAPLSIM. The MtN3/slv 2 domain occupies 133-216; that stretch reads VLGGICVGFS…MILYVIFKYY (84 aa). Residues 154–166 lie on the Cytoplasmic side of the membrane; sequence RVVIRTKSVEFMP. A helical transmembrane segment spans residues 167–187; it reads FSLSLFLTISAITWLFYGLAI. Residues 188-192 are Extracellular-facing; it reads KDFYV. Residues 193–213 traverse the membrane as a helical segment; the sequence is ALPNILGAFLGAVQMILYVIF. The Cytoplasmic segment spans residues 214–281; the sequence is KYYKTPLVVD…EDQMDKKMPN (68 aa). The span at 244-259 shows a compositional bias: polar residues; sequence TPASGDLTVQPQTNPD. The interval 244–281 is disordered; the sequence is TPASGDLTVQPQTNPDVSHPIKTHGGDLEDQMDKKMPN. Residues 267–281 show a composition bias toward basic and acidic residues; sequence HGGDLEDQMDKKMPN.

Belongs to the SWEET sugar transporter family. Forms homooligomers and/or heterooligomers.

It is found in the cell membrane. Its function is as follows. Mediates both low-affinity uptake and efflux of sugar across the plasma membrane. In Arabidopsis thaliana (Mouse-ear cress), this protein is Bidirectional sugar transporter SWEET14.